A 370-amino-acid polypeptide reads, in one-letter code: MKLNRFGAAVGVLAAGALVLSACGNDDNVTGGGATTGQASAKVDCGGKKTLKASGSTAQANAMTRFVNVFEQACPGQTLNYTANGSGAGISEFNGNQTDFGGSDVPLSKDEAAAAQRRCGSPAWNLPVVFGPIAVTYNLNSVSSLNLDGPTLAKIFNGSITQWNNPAIQALNRDFTLPGERIHVVFRSDESGTTDNFQRYLQAASNGAWGKGAGKSFQGGVGEGARGNDGTSAAAKNTPGSITYNEWSFAQAQHLTMANIVTSAGGDPVAITIDSVGQTIAGATISGVGNDLVLDTDSFYRPKRPGSYPIVLATYEIVCSKYPDSQVGTAVKAFLQSTIGAGQSGLGDNGYIPIPDEFKSRLSTAVNAIA.

Residues 1–22 (MKLNRFGAAVGVLAAGALVLSA) form the signal peptide. Residue C23 is the site of N-palmitoyl cysteine attachment. The S-diacylglycerol cysteine moiety is linked to residue C23. Residues 56–58 (STA), S86, D104, and 191–193 (SGT) each bind phosphate.

This sequence belongs to the PstS family. In terms of assembly, the complex is composed of two ATP-binding proteins (PstB), two transmembrane proteins (PstC and PstA) and a solute-binding protein (PstS).

It is found in the cell membrane. Part of the ABC transporter complex PstSACB involved in phosphate import. The sequence is that of Phosphate-binding protein PstS 3 (pstS3) from Mycobacterium bovis (strain ATCC BAA-935 / AF2122/97).